The sequence spans 460 residues: Lipase member H (460 aa).

An N-terminal signal peptide occupies residues 1–24 (MLLRFYFNGLLFVGCLLSWGRSDT). 2 N-linked (GlcNAc...) asparagine glycosylation sites follow: Asn-67 and Asn-75. Ser-163 functions as the Nucleophile in the catalytic mechanism. An N-linked (GlcNAc...) asparagine glycan is attached at Asn-177. The Charge relay system role is filled by Asp-187. A disulfide bond links Cys-242 and Cys-255. The Charge relay system role is filled by His-257. 2 cysteine pairs are disulfide-bonded: Cys-279-Cys-290 and Cys-293-Cys-301. An N-linked (GlcNAc...) asparagine glycan is attached at Asn-289. Asn-366 carries N-linked (GlcNAc...) asparagine glycosylation. Residues Cys-436 and Cys-455 are joined by a disulfide bond.

Belongs to the AB hydrolase superfamily. Lipase family.

It localises to the secreted. The protein resides in the cell membrane. It catalyses the reaction 1-hexadecanoyl-2-(9Z-octadecenoyl)-sn-glycero-3-phosphate + H2O = 2-(9Z-octadecenoyl)-sn-glycero-3-phosphate + hexadecanoate + H(+). Its function is as follows. Hydrolyzes specifically phosphatidic acid (PA) to produce 2-acyl lysophosphatidic acid (LPA; a potent bioactive lipid mediator) and fatty acid. Does not hydrolyze other phospholipids, like phosphatidylserine (PS), phosphatidylcholine (PC) and phosphatidylethanolamine (PE) or triacylglycerol (TG). The protein is Lipase member H (liph) of Xenopus tropicalis (Western clawed frog).